A 79-amino-acid chain; its full sequence is Cyclin-dependent kinases regulatory subunit 2 (79 aa).

Residue lysine 4 is modified to N6-acetyllysine.

This sequence belongs to the CKS family. Forms a homohexamer that can probably bind six kinase subunits.

Functionally, binds to the catalytic subunit of the cyclin dependent kinases and is essential for their biological function. The protein is Cyclin-dependent kinases regulatory subunit 2 (Cks2) of Mus musculus (Mouse).